A 119-amino-acid chain; its full sequence is Ribonuclease P protein component (119 aa).

It belongs to the RnpA family. In terms of assembly, consists of a catalytic RNA component (M1 or rnpB) and a protein subunit.

The catalysed reaction is Endonucleolytic cleavage of RNA, removing 5'-extranucleotides from tRNA precursor.. RNaseP catalyzes the removal of the 5'-leader sequence from pre-tRNA to produce the mature 5'-terminus. It can also cleave other RNA substrates such as 4.5S RNA. The protein component plays an auxiliary but essential role in vivo by binding to the 5'-leader sequence and broadening the substrate specificity of the ribozyme. The polypeptide is Ribonuclease P protein component (Streptococcus pyogenes serotype M5 (strain Manfredo)).